A 371-amino-acid chain; its full sequence is MMIKDSTPKADGFYMPAEFSPHAGTFLIWPVRPGSWTNAGADVQPVFVELIREISAVEELYLLVDEAHRPQAENMLKDLPQQHIHYLAIPTDDAWARDMGPTYVIDGQGRRRGINWRFNAWGGDFDGLYPDYGQDDAAAEKMCAALGDELYDAGDFVLEGGSIHVDGEGTVVVTEACLLSQGRNPDLSKEQIEAMLLKYLGAEKVIWLPRGIHNDETNEHVDNVFAFVRPGEVLLAWTDDKDDPQYELSQADLEVLESATDARGRKFVIHKLPIPQEPVCITAEEADSFTFEEGEDRREPGERLAASYVNFYLCNGKVILPQFGDEMDIEAQRILGKCFPERKVVPLPAKAVIVGGGNFHCLTQQIPAIER.

C361 serves as the catalytic Amidino-cysteine intermediate.

This sequence belongs to the agmatine deiminase family.

The enzyme catalyses agmatine + H2O = N-carbamoylputrescine + NH4(+). The protein is Putative agmatine deiminase of Selenomonas ruminantium.